The chain runs to 299 residues: 4-diphosphocytidyl-2-C-methyl-D-erythritol kinase (299 aa).

Residue K33 is part of the active site. 115 to 125 (PLASGLGGGSS) is a binding site for ATP. Residue D154 is part of the active site.

It belongs to the GHMP kinase family. IspE subfamily.

The catalysed reaction is 4-CDP-2-C-methyl-D-erythritol + ATP = 4-CDP-2-C-methyl-D-erythritol 2-phosphate + ADP + H(+). Its pathway is isoprenoid biosynthesis; isopentenyl diphosphate biosynthesis via DXP pathway; isopentenyl diphosphate from 1-deoxy-D-xylulose 5-phosphate: step 3/6. Functionally, catalyzes the phosphorylation of the position 2 hydroxy group of 4-diphosphocytidyl-2C-methyl-D-erythritol. In Deinococcus geothermalis (strain DSM 11300 / CIP 105573 / AG-3a), this protein is 4-diphosphocytidyl-2-C-methyl-D-erythritol kinase.